We begin with the raw amino-acid sequence, 215 residues long: Deoxyribose-phosphate aldolase (215 aa).

Asp-89 functions as the Proton donor/acceptor in the catalytic mechanism. Lys-153 functions as the Schiff-base intermediate with acetaldehyde in the catalytic mechanism. The active-site Proton donor/acceptor is Lys-182.

The protein belongs to the DeoC/FbaB aldolase family. DeoC type 1 subfamily.

The protein resides in the cytoplasm. It catalyses the reaction 2-deoxy-D-ribose 5-phosphate = D-glyceraldehyde 3-phosphate + acetaldehyde. It participates in carbohydrate degradation; 2-deoxy-D-ribose 1-phosphate degradation; D-glyceraldehyde 3-phosphate and acetaldehyde from 2-deoxy-alpha-D-ribose 1-phosphate: step 2/2. Functionally, catalyzes a reversible aldol reaction between acetaldehyde and D-glyceraldehyde 3-phosphate to generate 2-deoxy-D-ribose 5-phosphate. The polypeptide is Deoxyribose-phosphate aldolase (Lactiplantibacillus plantarum (strain ATCC BAA-793 / NCIMB 8826 / WCFS1) (Lactobacillus plantarum)).